The following is a 994-amino-acid chain: MTLPSGDSSITNNTNQTLNEDEKRRLRREKLAALRQKKLAEAQNGEGNKRQEGNGNGTGQGTGNVAADLTTKRNEKQKVENSFAKLNSTSIDHSSTETQATSLEEKQRLLLKRQGQRIEDWKKNRSADTASHFPQRAKENLSHTRIAITKKSTFKLPKIKRNNNKRVFGFVNEDKEGGGGKEEEDEEEEFTKKKILKIANDDARDYLNYGEKFRKPVLEEAEDDLDQFIESISKSESFVDNNNGGKQVQEQNVEEEKQQQQQQQLEQEQEQEQEQLEKLPRYLAVNNNNNEDTDEVYRYEEDFDDEFDEDDEDDINKRLSAKLNKLQNTAKELKEIDHTSIEYPKFRKHFYQVPFEMSTMDNRELDMLRLELDNVRARGKNVPPPFLTWGQLLMPESVMSVIQNDLGFAKPSPIQCQAIPIVLSGRDMIGVAKTGSGKTLSYVLPMVRHIQDQLFPKPGEGPIGLVLSPTRELALQIEKEILKFSSTMDLKVCCCYGGSNIENQISELKRGVNVIVATPGRLIDLLAANGGRITTLRRTTFVVLDEADRMFDMGFEPQIQKIFTQIRPDKQTVLFSATFPRKLEQLAKKVLHNPIEIIVGGVSVVASEISQEIILFEDTDQLMNHKIQKLEDILSRFFDLGKNTGKVLVFVEKQTDADKLVSVLLKKAIPCIAIHGGKDQIDRKHAIREFSDDQSGINVLIATSIAARGLDVRNLDLVVNFEPPSHLEDYVHRVGRTGRAGKHGEAITFVDNTQEKEISILVKALKMSSRAVDSKLQEIADKFMKKIESGEEKRSSGFGGKGLEKLQNVRETNMQLQKKMFGNFKKEDGKKSHRDLSEQVDYFGSSSSSSSFPSSSNTTTTTTTTSTASAIEIPTFEIIEGNSPETSGPDKCKFYCRVTINDLPQKVRWGIVQRESLSKIIEASKTSITTRGQFYPPQSKQTPTNDQPKLYLLIEGLTRKAVEEAAVLIRDKMLQGVEAMRLDNHSAPTGRYVV.

The segment covering 1 to 18 has biased composition (polar residues); sequence MTLPSGDSSITNNTNQTL. Disordered regions lie at residues 1–105, 170–190, and 235–275; these read MTLP…SLEE, FVNE…EEEF, and SESF…EQEQ. Composition is skewed to basic and acidic residues over residues 20 to 32 and 70 to 79; these read EDEK…EKLA and TTKRNEKQKV. Residues 20–87 are a coiled coil; sequence EDEKRRLRRE…KVENSFAKLN (68 aa). Polar residues predominate over residues 84-102; the sequence is AKLNSTSIDHSSTETQATS. Basic and acidic residues predominate over residues 172 to 181; that stretch reads NEDKEGGGGK. 2 coiled-coil regions span residues 217–284 and 310–382; these read VLEE…RYLA and DDED…GKNV. The span at 235 to 245 shows a compositional bias: polar residues; sequence SESFVDNNNGG. The Q motif motif lies at 387–416; it reads LTWGQLLMPESVMSVIQNDLGFAKPSPIQC. One can recognise a Helicase ATP-binding domain in the interval 419–597; it reads IPIVLSGRDM…KKVLHNPIEI (179 aa). 432–439 is a binding site for ATP; sequence AKTGSGKT. The DEAD box signature appears at 545 to 548; it reads DEAD. Residues 629–780 form the Helicase C-terminal domain; that stretch reads KLEDILSRFF…AVDSKLQEIA (152 aa). The tract at residues 842-867 is disordered; sequence YFGSSSSSSSFPSSSNTTTTTTTTST. Over residues 845-867 the composition is skewed to low complexity; that stretch reads SSSSSSSFPSSSNTTTTTTTTST.

The protein belongs to the DEAD box helicase family. DDX46/PRP5 subfamily.

The protein resides in the nucleus. It carries out the reaction ATP + H2O = ADP + phosphate + H(+). ATP-dependent RNA helicase involved spliceosome assembly and in nuclear splicing. Catalyzes an ATP-dependent conformational change of U2 snRNP. Bridges U1 and U2 snRNPs and enables stable U2 snRNP association with intron RNA. This Lodderomyces elongisporus (strain ATCC 11503 / CBS 2605 / JCM 1781 / NBRC 1676 / NRRL YB-4239) (Yeast) protein is Pre-mRNA-processing ATP-dependent RNA helicase PRP5 (PRP5).